Consider the following 678-residue polypeptide: Oviduct-specific glycoprotein (678 aa).

An N-terminal signal peptide occupies residues 1 to 21; it reads MWKLLLWVGLVLVLKHHDGAA. One can recognise a GH18 domain in the interval 22–385; sequence HKLVCYFTNW…YVLNDILVRA (364 aa). Cys26 and Cys51 are oxidised to a cystine. Residues 71–72, 98–101, Tyr142, 211–214, and Trp355 each bind chitin; these read LQ, GGWN, and LSYD. Residues Asn402 and Asn441 are each glycosylated (N-linked (GlcNAc...) asparagine). The tract at residues 524-544 is disordered; sequence LTPVGHQSVTPVSHQSVSPGG. The segment covering 528–544 has biased composition (polar residues); sequence GHQSVTPVSHQSVSPGG. 3 N-linked (GlcNAc...) asparagine glycosylation sites follow: Asn580, Asn596, and Asn648. The segment at 581 to 606 is disordered; sequence ISVTPEGQTMPLRGENLTSEVGTHPR. Over residues 651–662 the composition is skewed to polar residues; it reads SVNSVTPQTSPL. Positions 651–678 are disordered; it reads SVNSVTPQTSPLSLKKEIPENSAVDEEA.

This sequence belongs to the glycosyl hydrolase 18 family. In terms of tissue distribution, oviduct.

Its subcellular location is the cytoplasmic vesicle. It localises to the secretory vesicle. Functionally, binds to oocyte zona pellucida in vivo. May play a role in the fertilization process and/or early embryonic development. This is Oviduct-specific glycoprotein (OVGP1) from Homo sapiens (Human).